We begin with the raw amino-acid sequence, 397 residues long: Elongation factor Tu (397 aa).

Residues 10–207 (KPHVNVGTIG…ACDSYIPDPQ (198 aa)) form the tr-type G domain. The tract at residues 19-26 (GHIDHGKT) is G1. 19-26 (GHIDHGKT) provides a ligand contact to GTP. Threonine 26 lines the Mg(2+) pocket. A G2 region spans residues 60–64 (GITIA). The G3 stretch occupies residues 81–84 (DCPG). GTP is bound by residues 81–85 (DCPGH) and 136–139 (NKCD). The segment at 136–139 (NKCD) is G4. The tract at residues 174 to 176 (SAL) is G5.

It belongs to the TRAFAC class translation factor GTPase superfamily. Classic translation factor GTPase family. EF-Tu/EF-1A subfamily. Monomer.

It localises to the cytoplasm. The enzyme catalyses GTP + H2O = GDP + phosphate + H(+). Functionally, GTP hydrolase that promotes the GTP-dependent binding of aminoacyl-tRNA to the A-site of ribosomes during protein biosynthesis. The protein is Elongation factor Tu of Lawsonia intracellularis (strain PHE/MN1-00).